The chain runs to 530 residues: Hyccin 2 (530 aa).

Phosphothreonine occurs at positions 30 and 306. Residues Ser321 and Ser341 each carry the phosphoserine modification. A disordered region spans residues 328-404; it reads RREGAEGLNG…SNESPRDSVV (77 aa). The span at 353–373 shows a compositional bias: polar residues; it reads SGASLSSQPHGTKPPSSSQRG. Phosphoserine is present on residues Ser430, Ser442, Ser444, and Ser491. The interval 502-530 is disordered; that stretch reads EGKELLSPGAPLTKQSRSPSFNMQLISQV. The segment covering 514–530 has biased composition (polar residues); sequence TKQSRSPSFNMQLISQV.

Belongs to the Hyccin family. As to quaternary structure, component of a phosphatidylinositol 4-kinase (PI4K) complex, composed of PI4KA, EFR3 (EFR3A or EFR3B), TTC7 (TTC7A or TTC7B) and HYCC (HYCC1 or HYCC2). In terms of tissue distribution, expressed in the central nervous system. Expressed at much lower level in oligodendrocytes than in neurons.

The protein localises to the cytoplasm. It localises to the cytosol. Its subcellular location is the cell membrane. Functionally, component of a complex required to localize phosphatidylinositol 4-kinase (PI4K) to the plasma membrane. This is Hyccin 2 (Hycc2) from Mus musculus (Mouse).